The following is a 651-amino-acid chain: Acetyl-coenzyme A synthetase (651 aa).

CoA is bound by residues 189–192 (RGGK), T311, and N335. Residues 387–389 (GEP), 411–416 (DTWWQT), D500, and R515 contribute to the ATP site. S523 provides a ligand contact to CoA. Position 526 (R526) interacts with ATP. Mg(2+)-binding residues include V537, H539, and V542. R586 contributes to the CoA binding site. K611 bears the N6-acetyllysine mark.

Belongs to the ATP-dependent AMP-binding enzyme family. It depends on Mg(2+) as a cofactor. Post-translationally, acetylated. Deacetylation by the SIR2-homolog deacetylase activates the enzyme.

It catalyses the reaction acetate + ATP + CoA = acetyl-CoA + AMP + diphosphate. Catalyzes the conversion of acetate into acetyl-CoA (AcCoA), an essential intermediate at the junction of anabolic and catabolic pathways. AcsA undergoes a two-step reaction. In the first half reaction, AcsA combines acetate with ATP to form acetyl-adenylate (AcAMP) intermediate. In the second half reaction, it can then transfer the acetyl group from AcAMP to the sulfhydryl group of CoA, forming the product AcCoA. This Brucella abortus (strain S19) protein is Acetyl-coenzyme A synthetase.